Reading from the N-terminus, the 302-residue chain is Aspartate carbamoyltransferase catalytic subunit (302 aa).

The carbamoyl phosphate site is built by arginine 51 and threonine 52. Lysine 80 contacts L-aspartate. Carbamoyl phosphate contacts are provided by arginine 101, histidine 129, and glutamine 132. Residues arginine 162 and arginine 224 each coordinate L-aspartate. The carbamoyl phosphate site is built by leucine 263 and proline 264.

Belongs to the aspartate/ornithine carbamoyltransferase superfamily. ATCase family. In terms of assembly, heterododecamer (2C3:3R2) of six catalytic PyrB chains organized as two trimers (C3), and six regulatory PyrI chains organized as three dimers (R2).

The catalysed reaction is carbamoyl phosphate + L-aspartate = N-carbamoyl-L-aspartate + phosphate + H(+). It functions in the pathway pyrimidine metabolism; UMP biosynthesis via de novo pathway; (S)-dihydroorotate from bicarbonate: step 2/3. Catalyzes the condensation of carbamoyl phosphate and aspartate to form carbamoyl aspartate and inorganic phosphate, the committed step in the de novo pyrimidine nucleotide biosynthesis pathway. This Azobacteroides pseudotrichonymphae genomovar. CFP2 protein is Aspartate carbamoyltransferase catalytic subunit.